The sequence spans 857 residues: Trehalose transporter 1 (857 aa).

Disordered stretches follow at residues 1–28 (MSGR…KLKE) and 62–202 (DPFL…QKAT). Topologically, residues 1–392 (MSGRDNRGAG…VYRPTTNPIY (392 aa)) are cytoplasmic. At Ala9 the chain carries Phosphothreonine. Residue Gly12 is modified to Phosphoserine. A compositionally biased stretch (polar residues) spans 69-81 (VSPQRHPQNTVRT). Over residues 134-143 (EIREHRDRQQ) the composition is skewed to basic and acidic residues. Polar residues predominate over residues 171–181 (GNSNTNSNKAA). 3 positions are modified to phosphoserine: Ser248, Ser249, and Ser250. Disordered regions lie at residues 249-269 (SSEE…HQSL) and 280-299 (VLQG…EHKR). Phosphoserine is present on residues Ser320 and Ser322. The segment at 327–346 (LTSRQHFQQQRSISTDSRKS) is disordered. Over residues 330–341 (RQHFQQQRSIST) the composition is skewed to polar residues. A helical transmembrane segment spans residues 393-413 (IWTQVLAALSVSLGSLVVGFV). The Extracellular segment spans residues 414–440 (SAYTSPALVSMTDRNITSFEVTQDAGS). N-linked (GlcNAc...) asparagine glycosylation is present at Asn428. Residues 441 to 461 (WVGGIMPLAGLAGGIAGGPLI) form a helical membrane-spanning segment. Residues 462–473 (EYLGRRNTILAT) lie on the Cytoplasmic side of the membrane. A helical membrane pass occupies residues 474–494 (AVPFIVSSLLIACAVNVAMVL). Over 495–497 (CGR) the chain is Extracellular. A helical transmembrane segment spans residues 498–518 (FLAGFCVGIASLSLPVYLGET). Over 519–528 (VQPEVRGTLG) the chain is Cytoplasmic. A helical membrane pass occupies residues 529–549 (LLPTAFGNIGILLCFVAGSFM). An N-linked (GlcNAc...) asparagine glycan is attached at Asn550. Residues 550–552 (NWS) are Extracellular-facing. The chain crosses the membrane as a helical span at residues 553–573 (MLAFLGAALPVPFLILMFLIP). Topologically, residues 574–636 (ETPRWFVGRG…ELLKLNNLKP (63 aa)) are cytoplasmic. Residues 637–657 (LSISLGLMFFQQFSGINAVIF) traverse the membrane as a helical segment. Topologically, residues 658–673 (YTVQIFKDAGSTIDGN) are extracellular. Residues 674-694 (LCTIIVGIVNFLATFIGIVLI) traverse the membrane as a helical segment. At 695-700 (DRAGRK) the chain is on the cytoplasmic side. The chain crosses the membrane as a helical span at residues 701 to 721 (ILLYVSDIAMVLTLFVLGGFF). Residues 722–740 (YCKTYGPDVSHLGWLPLTC) are Extracellular-facing. Residues 741–761 (FVIYILGFSLGFGPIPWLMMG) form a helical membrane-spanning segment. Over 762–767 (EILPAK) the chain is Cytoplasmic. Residues 768–788 (IRGSAASVATAFNWFCTFVVT) form a helical membrane-spanning segment. Topologically, residues 789 to 801 (KTFQDLTVAMGAH) are extracellular. A helical membrane pass occupies residues 802-822 (GAFWLFGAICFVGLFFVIIYV). Residues 823 to 857 (PETQGKTLEDIERKMMGRVRRMSSVANIKPLSFNM) are Cytoplasmic-facing. Ser845 and Ser846 each carry phosphoserine.

The protein belongs to the major facilitator superfamily. Sugar transporter (TC 2.A.1.1) family. Trehalose transporter subfamily. As to expression, expressed in perineurial glia of the outer layer of the nervous system that forms the blood brain barrier (at protein level). Expressed in the fat body (at protein level). In terms of tissue distribution, may be specifically expressed in perineurial glia (at protein level). May be specifically expressed in the fat body (at protein level).

The protein localises to the cell membrane. It localises to the vesicle. It catalyses the reaction alpha,alpha-trehalose(in) = alpha,alpha-trehalose(out). It carries out the reaction D-glucose(out) = D-glucose(in). In terms of biological role, low-capacity facilitative transporter for trehalose. Can also transport glucose. Does not transport maltose, sucrose, lactose or fructose. Mediates the bidirectional transfer of trehalose. Responsible for the transport of trehalose synthesized in the fat body and the incorporation of trehalose into other tissues that require a carbon source, thereby regulating trehalose levels in the hemolymph. Required in glial cells of the blood brain barrier to fuel glycolysis but not required in neurons. Neurons rely on the citric acid cycle for their energy needs and utilise alanine and lactate, by-products of glial cell glycolysis released into the hemolymph, as fuel. Increased expression in glial cells of the blood brain barrier during starvation and increased cell surface localization enhances carbohydrate uptake to protect the central nervous system from restricted nutrient availability. The chain is Trehalose transporter 1 from Drosophila melanogaster (Fruit fly).